The primary structure comprises 3391 residues: Genome polyprotein (3391 aa).

The tract at residues 1–15 is interaction with host EXOC1; that stretch reads MNNQRKKTARPSFNM. Topologically, residues 1–101 are cytoplasmic; it reads MNNQRKKTAR…LNIMNRRKRS (101 aa). Residues 37 to 72 are hydrophobic; homodimerization of capsid protein C; that stretch reads LLSGQGPMKLVMAFIAFLRFLAIPPTAGILARWGSF. A propeptide spans 101–114 (ER anchor for the capsid protein C, removed in mature form by serine protease NS3); sequence SVTMLLMLLPTALA. The helical transmembrane segment at 102–119 threads the bilayer; it reads VTMLLMLLPTALAFHLTT. The Extracellular portion of the chain corresponds to 120–242; it reads RGGEPHMIVS…QIQRVETWAL (123 aa). An N-linked (GlcNAc...) asparagine; by host glycan is attached at Asn-183. The chain crosses the membrane as a helical span at residues 243–260; sequence RHPGFTVIALFLAHAIGT. Ser-261 is a topological domain (cytoplasmic). A helical membrane pass occupies residues 262-280; that stretch reads ITQKGIIFILLMLVTPSMA. Residues 281-725 lie on the Extracellular side of the membrane; sequence MRCVGIGSRD…HQVFGTAYGV (445 aa). Cystine bridges form between Cys-283–Cys-310, Cys-340–Cys-401, Cys-354–Cys-385, and Cys-372–Cys-396. A glycan (N-linked (GlcNAc...) asparagine; by host) is linked at Asn-347. The fusion peptide stretch occupies residues 378-391; it reads DRGWGNGCGLFGKG. An N-linked (GlcNAc...) asparagine; by host glycan is attached at Asn-433. 2 disulfide bridges follow: Cys-465/Cys-565 and Cys-582/Cys-613. Residues 726–746 traverse the membrane as a helical segment; the sequence is LFSGVSWTMKIGIGILLTWLG. Topologically, residues 747–752 are cytoplasmic; it reads LNSRST. The helical transmembrane segment at 753 to 773 threads the bilayer; sequence SLSMTCIAVGMVTLYLGVMVQ. Residues 774-1198 lie on the Extracellular side of the membrane; that stretch reads ADSGCVINWK…NASDRMGMGT (425 aa). Intrachain disulfides connect Cys-778–Cys-789, Cys-829–Cys-917, Cys-953–Cys-997, Cys-1054–Cys-1103, Cys-1065–Cys-1087, and Cys-1086–Cys-1090. Residues Asn-904 and Asn-981 are each glycosylated (N-linked (GlcNAc...) asparagine; by host). N-linked (GlcNAc...) asparagine; by host glycosylation occurs at Asn-1189. A helical transmembrane segment spans residues 1199–1219; the sequence is TYLALMATFKMRPMFAVGLLF. The Cytoplasmic segment spans residues 1220–1225; it reads RRLTSR. The helical transmembrane segment at 1226 to 1244 threads the bilayer; the sequence is EVLLLTIGLSLVASVELPN. Residues 1245 to 1268 are Lumenal-facing; the sequence is SLEELGDGLAMGIMILKLLTDFQS. Residues 1269–1289 form a helical membrane-spanning segment; the sequence is HQLWATLLSLTFVKTTFSLHY. Position 1290 (Ala-1290) is a topological domain, cytoplasmic. Residues 1291–1309 form a helical membrane-spanning segment; sequence WKTMAMVLSIVSLFPLCLS. The Lumenal segment spans residues 1310–1314; it reads TTSQK. The chain crosses the membrane as a helical span at residues 1315–1335; the sequence is TTWLPVLLGSLGCKPLTMFLI. Over 1336–1345 the chain is Cytoplasmic; it reads AENKIWGRKS. A helical membrane pass occupies residues 1346–1366; it reads WPLNEGIMAVGIVSILLSSLL. Residues 1367 to 1369 lie on the Lumenal side of the membrane; that stretch reads KND. A helical transmembrane segment spans residues 1370-1390; it reads VPLAGPLIAGGMLIACYVISG. Over 1391–1446 the chain is Cytoplasmic; that stretch reads SSADLSLEKAAEVSWEEEAEHSGASHNILVEVQDDGTMKIKDEERDDTLTILLKAT. The interval 1397–1436 is interacts with and activates NS3 protease; sequence LEKAAEVSWEEEAEHSGASHNILVEVQDDGTMKIKDEERD. The segment at residues 1447–1467 is an intramembrane region (helical); the sequence is LLAVSGVYPLSIPATLFVWYF. The Cytoplasmic portion of the chain corresponds to 1468-2147; sequence WQKKKQRSGV…MEELPDTIET (680 aa). Positions 1475–1652 constitute a Peptidase S7 domain; the sequence is SGVLWDTPSP…KASQEGPLPE (178 aa). Residues His-1525, Asp-1549, and Ser-1609 each act as charge relay system; for serine protease NS3 activity in the active site. The 157-residue stretch at 1655 to 1811 folds into the Helicase ATP-binding domain; that stretch reads DEVFRKRNLT…QSNAVIQDEE (157 aa). Residues 1659–1662 are important for RNA-binding; the sequence is RKRN. 1668–1675 is an ATP binding site; it reads LHPGSGKT. A DEAH box motif is present at residues 1759 to 1762; that stretch reads DEAH. In terms of domain architecture, Helicase C-terminal spans 1821–1988; the sequence is SGYEWITDFP…IIPALFEPER (168 aa). Lys-1863 is subject to N6-acetyllysine; by host. The chain crosses the membrane as a helical span at residues 2148-2168; sequence LMLLALIAVLTGGVTLFFLSG. The Lumenal segment spans residues 2169 to 2170; it reads KG. The segment at residues 2171 to 2191 is an intramembrane region (helical); that stretch reads LGKTSIGLLCVMASSVLLWMA. Residue Ser-2192 is a topological domain, lumenal. Residues 2193-2213 traverse the membrane as a helical segment; sequence VEPHWIAASIILEFFLMVLLI. Residues 2214–2228 lie on the Cytoplasmic side of the membrane; that stretch reads PEPDRQRTPQDNQLA. The helical transmembrane segment at 2229 to 2249 threads the bilayer; that stretch reads YVVIGLLFMILTVAANEMGLL. Topologically, residues 2250–2275 are lumenal; it reads ETTKKDLGIGHVAAENHHHATMLDVD. Residues 2276-2296 constitute an intramembrane region (helical); it reads LRPASAWTLYAVATTVITPMM. Residues 2297–2348 are Lumenal-facing; that stretch reads RHTIENTTANISLTAIANQAAILMGLDKGWPISKMDIGVPLLALGCYSQVNP. Asn-2302 and Asn-2306 each carry an N-linked (GlcNAc...) asparagine; by host glycan. The helical transmembrane segment at 2349-2369 threads the bilayer; sequence LTLTAAVLMLVAHYAIIGPGL. Residues 2370-2414 lie on the Cytoplasmic side of the membrane; it reads QAKATREAQKRTAAGIMKNPTVDGIVAIDLDPVVYDAKFEKQLGQ. A helical transmembrane segment spans residues 2415–2435; the sequence is IMLLILCTSQILLMRTTWALC. Residues 2436–2460 lie on the Lumenal side of the membrane; it reads ESITLATGPLTTLWEGSPGKFWNTT. Asn-2458 is a glycosylation site (N-linked (GlcNAc...) asparagine; by host). The helical transmembrane segment at 2461–2481 threads the bilayer; the sequence is IAVSMANIFRGSYLAGAGLAF. Topologically, residues 2482–3391 are cytoplasmic; that stretch reads SLMKSLGGGR…NESDPEGALW (910 aa). The mRNA cap 0-1 NS5-type MT domain maps to 2494-2755; it reads TGAKGKHWER…DVDLGAGTRH (262 aa). Ser-2548 is an S-adenosyl-L-methionine binding site. Ser-2548 is subject to Phosphoserine. The active-site For 2'-O-MTase activity is the Lys-2553. Positions 2569–2572 match the SUMO-interacting motif motif; the sequence is VIDL. The S-adenosyl-L-methionine site is built by Gly-2578, Trp-2579, Thr-2596, Lys-2597, Asp-2623, and Val-2624. Asp-2638 functions as the For 2'-O-MTase activity in the catalytic mechanism. Ile-2639 is an S-adenosyl-L-methionine binding site. Residues Lys-2672 and Glu-2708 each act as for 2'-O-MTase activity in the active site. Tyr-2710 contributes to the S-adenosyl-L-methionine binding site. Residues Glu-2929, His-2933, Cys-2938, and Cys-2941 each coordinate Zn(2+). Residues 3019-3168 form the RdRp catalytic domain; that stretch reads GNMYADDTAG…KPIDDRFATA (150 aa). Residues His-3203, Cys-3219, and Cys-3338 each contribute to the Zn(2+) site.

In the N-terminal section; belongs to the class I-like SAM-binding methyltransferase superfamily. mRNA cap 0-1 NS5-type methyltransferase family. Homodimer. Interacts (via N-terminus) with host EXOC1 (via C-terminus); this interaction results in EXOC1 degradation through the proteasome degradation pathway. As to quaternary structure, forms heterodimers with envelope protein E in the endoplasmic reticulum and Golgi. In terms of assembly, homodimer; in the endoplasmic reticulum and Golgi. Interacts with protein prM. Interacts with non-structural protein 1. Homodimer; Homohexamer when secreted. Interacts with envelope protein E. As to quaternary structure, interacts (via N-terminus) with serine protease NS3. In terms of assembly, forms a heterodimer with serine protease NS3. May form homooligomers. Forms a heterodimer with NS2B. Interacts with NS4B. Interacts with unphosphorylated RNA-directed RNA polymerase NS5; this interaction stimulates RNA-directed RNA polymerase NS5 guanylyltransferase activity. Interacts with host SHFL. As to quaternary structure, interacts with host MAVS; this interaction inhibits the synthesis of IFN-beta. Interacts with host SHFL. Interacts with host AUP1; the interaction occurs in the presence of Dengue virus NS4B and induces lipophagy which facilitates production of virus progeny particles. In terms of assembly, interacts with serine protease NS3. Homodimer. Interacts with host STAT2; this interaction inhibits the phosphorylation of the latter, and, when all viral proteins are present (polyprotein), targets STAT2 for degradation. Interacts with serine protease NS3. In terms of processing, specific enzymatic cleavages in vivo yield mature proteins. Cleavages in the lumen of endoplasmic reticulum are performed by host signal peptidase, whereas cleavages in the cytoplasmic side are performed by serine protease NS3. Signal cleavage at the 2K-4B site requires a prior NS3 protease-mediated cleavage at the 4A-2K site. Post-translationally, cleaved in post-Golgi vesicles by a host furin, releasing the mature small envelope protein M, and peptide pr. This cleavage is incomplete as up to 30% of viral particles still carry uncleaved prM. N-glycosylated. In terms of processing, N-glycosylated. The excreted form is glycosylated and this is required for efficient secretion of the protein from infected cells. Post-translationally, acetylated by host KAT5. Acetylation modulates NS3 RNA-binding and unwinding activities and plays an important positive role for viral replication. Sumoylation of RNA-directed RNA polymerase NS5 increases NS5 protein stability allowing proper viral RNA replication. In terms of processing, phosphorylated on serines residues. This phosphorylation may trigger NS5 nuclear localization.

The protein resides in the virion. Its subcellular location is the host nucleus. It localises to the host cytoplasm. It is found in the host perinuclear region. The protein localises to the secreted. The protein resides in the virion membrane. Its subcellular location is the host endoplasmic reticulum membrane. It localises to the host mitochondrion. It catalyses the reaction Selective hydrolysis of -Xaa-Xaa-|-Yaa- bonds in which each of the Xaa can be either Arg or Lys and Yaa can be either Ser or Ala.. The enzyme catalyses RNA(n) + a ribonucleoside 5'-triphosphate = RNA(n+1) + diphosphate. It carries out the reaction a ribonucleoside 5'-triphosphate + H2O = a ribonucleoside 5'-diphosphate + phosphate + H(+). The catalysed reaction is ATP + H2O = ADP + phosphate + H(+). It catalyses the reaction a 5'-end (5'-triphosphoguanosine)-ribonucleoside in mRNA + S-adenosyl-L-methionine = a 5'-end (N(7)-methyl 5'-triphosphoguanosine)-ribonucleoside in mRNA + S-adenosyl-L-homocysteine. The enzyme catalyses a 5'-end (N(7)-methyl 5'-triphosphoguanosine)-ribonucleoside in mRNA + S-adenosyl-L-methionine = a 5'-end (N(7)-methyl 5'-triphosphoguanosine)-(2'-O-methyl-ribonucleoside) in mRNA + S-adenosyl-L-homocysteine + H(+). Its function is as follows. Plays a role in virus budding by binding to the cell membrane and gathering the viral RNA into a nucleocapsid that forms the core of a mature virus particle. During virus entry, may induce genome penetration into the host cytoplasm after hemifusion induced by the surface proteins. Can migrate to the cell nucleus where it modulates host functions. Overcomes the anti-viral effects of host EXOC1 by sequestering and degrading the latter through the proteasome degradation pathway. Functionally, inhibits RNA silencing by interfering with host Dicer. In terms of biological role, prevents premature fusion activity of envelope proteins in trans-Golgi by binding to envelope protein E at pH6.0. After virion release in extracellular space, gets dissociated from E dimers. Acts as a chaperone for envelope protein E during intracellular virion assembly by masking and inactivating envelope protein E fusion peptide. prM is the only viral peptide matured by host furin in the trans-Golgi network probably to avoid catastrophic activation of the viral fusion activity in acidic Golgi compartment prior to virion release. prM-E cleavage is inefficient, and many virions are only partially matured. These uncleaved prM would play a role in immune evasion. Its function is as follows. May play a role in virus budding. Exerts cytotoxic effects by activating a mitochondrial apoptotic pathway through M ectodomain. May display a viroporin activity. Functionally, binds to host cell surface receptor and mediates fusion between viral and cellular membranes. Envelope protein is synthesized in the endoplasmic reticulum in the form of heterodimer with protein prM. They play a role in virion budding in the ER, and the newly formed immature particle is covered with 60 spikes composed of heterodimer between precursor prM and envelope protein E. The virion is transported to the Golgi apparatus where the low pH causes dissociation of PrM-E heterodimers and formation of E homodimers. prM-E cleavage is inefficient, and many virions are only partially matured. These uncleaved prM would play a role in immune evasion. In terms of biological role, involved in immune evasion, pathogenesis and viral replication. Once cleaved off the polyprotein, is targeted to three destinations: the viral replication cycle, the plasma membrane and the extracellular compartment. Essential for viral replication. Required for formation of the replication complex and recruitment of other non-structural proteins to the ER-derived membrane structures. Excreted as a hexameric lipoparticle that plays a role against host immune response. Antagonizing the complement function. Binds to the host macrophages and dendritic cells. Inhibits signal transduction originating from Toll-like receptor 3 (TLR3). Disrupts the host endothelial glycocalyx layer of host pulmonary microvascular endothelial cells, inducing degradation of sialic acid and shedding of heparan sulfate proteoglycans. NS1 induces expression of sialidases, heparanase, and activates cathepsin L, which activates heparanase via enzymatic cleavage. These effects are probably linked to the endothelial hyperpermeability observed in severe dengue disease. Its function is as follows. Component of the viral RNA replication complex that functions in virion assembly and antagonizes the host immune response. Functionally, required cofactor for the serine protease function of NS3. May have membrane-destabilizing activity and form viroporins. In terms of biological role, displays three enzymatic activities: serine protease, NTPase and RNA c. NS3 serine protease, in association with NS2B, performs its autocleavage and cleaves the polyprotein at dibasic sites in the cytoplasm: C-prM, NS2A-NS2B, NS2B-NS3, NS3-NS4A, NS4A-2K and NS4B-NS5. NS3 RNA helicase binds RNA and unwinds dsRNA in the 3' to 5' direction. Regulates the ATPase activity of the NS3 helicase activity. NS4A allows NS3 helicase to conserve energy during unwinding. Plays a role in the inhibition of the host innate immune response. Interacts with host MAVS and thereby prevents the interaction between RIGI and MAVS. In turn, IFN-beta production is impaired. Interacts with host AUP1 which mediates induction of lipophagy in host cells and facilitates production of virus progeny particles. Its function is as follows. Functions as a signal peptide for NS4B and is required for the interferon antagonism activity of the latter. Functionally, induces the formation of ER-derived membrane vesicles where the viral replication takes place. Inhibits interferon (IFN)-induced host STAT1 phosphorylation and nuclear translocation, thereby preventing the establishment of cellular antiviral state by blocking the IFN-alpha/beta pathway. In terms of biological role, replicates the viral (+) and (-) RNA genome, and performs the capping of genomes in the cytoplasm. NS5 methylates viral RNA cap at guanine N-7 and ribose 2'-O positions. Besides its role in RNA genome replication, also prevents the establishment of cellular antiviral state by blocking the interferon-alpha/beta (IFN-alpha/beta) signaling pathway. Inhibits host TYK2 and STAT2 phosphorylation, thereby preventing activation of JAK-STAT signaling pathway. The protein is Genome polyprotein of Aedes aegypti (Yellowfever mosquito).